Here is a 1257-residue protein sequence, read N- to C-terminus: Neurocan core protein (1257 aa).

An N-terminal signal peptide occupies residues 1-22 (MGAESVWASGLLVLWLLLLVSG). The region spanning 37–157 (HMLKSGSGPI…EQDLVTLEVT (121 aa)) is the Ig-like V-type domain. Disulfide bonds link C58/C139, C181/C252, C205/C226, C279/C354, and C303/C324. An N-linked (GlcNAc...) asparagine glycan is attached at N121. Link domains lie at 159-254 (VVFH…YCFA) and 258-356 (GGEV…YCFR). N339 carries an N-linked (GlcNAc...) asparagine glycan. The interval 361-391 (TPQRGDSEIPSSGDEGEIVSAEGPPAPELKP) is disordered. O-linked (Xyl...) (chondroitin sulfate) serine glycans are attached at residues S380 and S410. Low complexity predominate over residues 447-459 (SSTGVPSPSSLGV). Disordered regions lie at residues 447–493 (SSTG…FQQQ), 550–610 (GSLG…AVPS), and 683–707 (GAEDPETPFQTTMAAPGEASHGSPE). Polar residues predominate over residues 464 to 473 (TTPSGTQVAP). Positions 569 to 580 (SPSTVPSTDSTP) are enriched in low complexity. N737 carries N-linked (GlcNAc...) asparagine glycosylation. A glycan (O-linked (Xyl...) (chondroitin sulfate) serine) is linked at S944. One can recognise an EGF-like 1 domain in the interval 949–985 (PTDPCENNPCLHGGTCRTNGTMYGCSCDQGYAGENCE). 11 cysteine pairs are disulfide-bonded: C953–C964, C958–C973, C975–C984, C991–C1002, C996–C1011, C1013–C1022, C1029–C1040, C1057–C1149, C1125–C1141, C1156–C1199, and C1185–C1212. N967 carries N-linked (GlcNAc...) asparagine glycosylation. The 37-residue stretch at 987–1023 (DIDDCLCSPCENGGTCIDEVNGFICLCLPSYGGNLCE) folds into the EGF-like 2; calcium-binding domain. Positions 1025 to 1154 (DTEGCDRGWH…LPYVCKKGTV (130 aa)) constitute a C-type lectin domain. Positions 1154–1214 (VLCGPPPAVE…WDRPQIVCTK (61 aa)) constitute a Sushi domain. N-linked (GlcNAc...) asparagine glycosylation occurs at N1164. Positions 1215 to 1244 (PRRSHRMRRHHHHPHRHHKPRKEHRKHKRH) are enriched in basic residues. Positions 1215-1257 (PRRSHRMRRHHHHPHRHHKPRKEHRKHKRHPAEDWEKDEGDFC) are disordered.

Belongs to the aggrecan/versican proteoglycan family. In terms of processing, two isoforms were found that probably arise by proteolytic processing. The large isoform is predominant in early postnatal brain, the small isoform is found in adult brain. Post-translationally, O-glycosylated; contains chondroitin sulfate. Early postnatal and adult brain; not expressed in kidney, lung, liver and muscle.

It localises to the secreted. In terms of biological role, may modulate neuronal adhesion and neurite growth during development by binding to neural cell adhesion molecules (NG-CAM and N-CAM). Chondroitin sulfate proteoglycan; binds to hyaluronic acid. The chain is Neurocan core protein (Ncan) from Rattus norvegicus (Rat).